We begin with the raw amino-acid sequence, 593 residues long: Aspartate--tRNA ligase (593 aa).

E180 is an L-aspartate binding site. The interval 204–207 (QLFK) is aspartate. R226 serves as a coordination point for L-aspartate. Residues 226-228 (RDE) and Q235 each bind ATP. H454 is an L-aspartate binding site. Position 488 (E488) interacts with ATP. R495 contacts L-aspartate. Residue 540 to 543 (GFDR) participates in ATP binding.

This sequence belongs to the class-II aminoacyl-tRNA synthetase family. Type 1 subfamily. In terms of assembly, homodimer.

The protein localises to the cytoplasm. The enzyme catalyses tRNA(Asp) + L-aspartate + ATP = L-aspartyl-tRNA(Asp) + AMP + diphosphate. Functionally, catalyzes the attachment of L-aspartate to tRNA(Asp) in a two-step reaction: L-aspartate is first activated by ATP to form Asp-AMP and then transferred to the acceptor end of tRNA(Asp). The sequence is that of Aspartate--tRNA ligase from Clostridium novyi (strain NT).